Reading from the N-terminus, the 385-residue chain is UPF0284 protein P9301_04631 (385 aa).

Belongs to the UPF0284 family.

In Prochlorococcus marinus (strain MIT 9301), this protein is UPF0284 protein P9301_04631.